Consider the following 405-residue polypeptide: MSINICRDNHDPFYRYKMPPIQAKVEGRGNGIKTAVLNVADISHALNRPAPYIVKYFGFELGAQTSISVDKDRYLVNGVHEPAKLQDVLDGFINKFVLCGSCKNPETEIIITKDNDLVRDCKACGKRTPMDLRHKLSSFILKNPPDSVSGSKKKKKAATASANVRGGGLSISDIAQGKSQNAPSDGTGSSTPQHHDEDEDELSRQIKAAASTLEDIEVKDDEWAVDMSEEAIRARAKELEVNSELTQLDEYGEWILEQAGEDKENLPSDVELYKKAAELDVLNDPKIGCVLAQCLFDEDIVNEIAEHNAFFTKILVTPEYEKNFMGGIERFLGLEHKDLIPLLPKILVQLYNNDIISEEEIMRFGTKSSKKFVPKEVSKKVRRAAKPFITWLETAESDDDEEDDE.

GTP is bound at residue 27–34 (GRGNGIKT). The disordered stretch occupies residues 143–202 (NPPDSVSGSKKKKKAATASANVRGGGLSISDIAQGKSQNAPSDGTGSSTPQHHDEDEDEL). Phosphoserine is present on residues serine 170 and serine 172. Residues 177-192 (GKSQNAPSDGTGSSTP) are compositionally biased toward polar residues. At threonine 191 the chain carries Phosphothreonine. At serine 228 the chain carries Phosphoserine. The W2 domain occupies 241–402 (VNSELTQLDE…ETAESDDDEE (162 aa)). At threonine 317 the chain carries Phosphothreonine. Residue serine 397 is modified to Phosphoserine.

This sequence belongs to the eIF-2-beta/eIF-5 family. In terms of assembly, monomer. The factors eIF-1, eIF-2, eIF-3, TIF5/eIF-5 and methionyl-tRNAi form a multifactor complex (MFC) that may bind to the 40S ribosome. TIF32, NIP1 and TIF5/eIF-5 comprise a minimal 40S-ribosome-binding unit. Interacts with NIP1. Interacts with SUI3.

Catalyzes the hydrolysis of GTP bound to the 40S ribosomal initiation complex (40S.mRNA.Met-tRNA[F].eIF-2.GTP) with the subsequent joining of a 60S ribosomal subunit resulting in the release of eIF-2 and the guanine nucleotide. The subsequent joining of a 60S ribosomal subunit results in the formation of a functional 80S initiation complex (80S.mRNA.Met-tRNA[F]). eIF-5 is essential for cell viability. This chain is Eukaryotic translation initiation factor 5 (TIF5), found in Saccharomyces cerevisiae (strain ATCC 204508 / S288c) (Baker's yeast).